Reading from the N-terminus, the 362-residue chain is Oxysterol-binding protein 5 (362 aa).

Belongs to the OSBP family.

The chain is Oxysterol-binding protein 5 (osbE) from Dictyostelium discoideum (Social amoeba).